Consider the following 65-residue polypeptide: Protein YSY6 (65 aa).

Residues 45–65 form a helical membrane-spanning segment; that stretch reads LGILLFLLVGGGVLQLISYIL.

It belongs to the RAMP4 family.

It is found in the membrane. The protein resides in the endoplasmic reticulum membrane. In terms of biological role, interacts with target proteins during their translocation into the lumen of the endoplasmic reticulum. Protects unfolded target proteins against degradation during ER stress. May facilitate glycosylation of target proteins after termination of ER stress. The polypeptide is Protein YSY6 (YSY6) (Saccharomyces cerevisiae (strain ATCC 204508 / S288c) (Baker's yeast)).